The primary structure comprises 131 residues: Large ribosomal subunit protein bL17 (131 aa).

Belongs to the bacterial ribosomal protein bL17 family. In terms of assembly, part of the 50S ribosomal subunit. Contacts protein L32.

The protein is Large ribosomal subunit protein bL17 of Chromobacterium violaceum (strain ATCC 12472 / DSM 30191 / JCM 1249 / CCUG 213 / NBRC 12614 / NCIMB 9131 / NCTC 9757 / MK).